A 156-amino-acid polypeptide reads, in one-letter code: Small ribosomal subunit protein uS7 (156 aa).

The protein belongs to the universal ribosomal protein uS7 family. As to quaternary structure, part of the 30S ribosomal subunit. Contacts proteins S9 and S11.

In terms of biological role, one of the primary rRNA binding proteins, it binds directly to 16S rRNA where it nucleates assembly of the head domain of the 30S subunit. Is located at the subunit interface close to the decoding center, probably blocks exit of the E-site tRNA. This Trichormus variabilis (strain ATCC 29413 / PCC 7937) (Anabaena variabilis) protein is Small ribosomal subunit protein uS7.